Consider the following 807-residue polypeptide: Probable E3 ubiquitin-protein ligase mug30 (807 aa).

Residues 453–807 form the HECT domain; sequence RNKDFRKALK…LLETNGFNIR (355 aa). The active-site Glycyl thioester intermediate is cysteine 775.

It is found in the cytoplasm. Its subcellular location is the cytoskeleton. The protein localises to the microtubule organizing center. The protein resides in the spindle pole body. It carries out the reaction S-ubiquitinyl-[E2 ubiquitin-conjugating enzyme]-L-cysteine + [acceptor protein]-L-lysine = [E2 ubiquitin-conjugating enzyme]-L-cysteine + N(6)-ubiquitinyl-[acceptor protein]-L-lysine.. The protein operates within protein modification; protein ubiquitination. Probable E3 ubiquitin-protein ligase. Has a role in meiosis. This Schizosaccharomyces pombe (strain 972 / ATCC 24843) (Fission yeast) protein is Probable E3 ubiquitin-protein ligase mug30 (mug30).